The following is an 86-amino-acid chain: Large ribosomal subunit protein bL31m (86 aa).

A mitochondrion-targeting transit peptide spans 1–18 (MKCSLRLFEKAGRLSVRS).

It belongs to the bacterial ribosomal protein bL31 family. Highly divergent. As to quaternary structure, component of the mitochondrial large ribosomal subunit (mt-LSU). Mature yeast 74S mitochondrial ribosomes consist of a small (37S) and a large (54S) subunit. The 37S small subunit contains a 15S ribosomal RNA (15S mt-rRNA) and at least 32 different proteins. The 54S large subunit contains a 21S rRNA (21S mt-rRNA) and at least 45 different proteins.

The protein localises to the mitochondrion. Its function is as follows. Component of the mitochondrial ribosome (mitoribosome), a dedicated translation machinery responsible for the synthesis of mitochondrial genome-encoded proteins, including at least some of the essential transmembrane subunits of the mitochondrial respiratory chain. The mitoribosomes are attached to the mitochondrial inner membrane and translation products are cotranslationally integrated into the membrane. This chain is Large ribosomal subunit protein bL31m (tam9), found in Schizosaccharomyces pombe (strain 972 / ATCC 24843) (Fission yeast).